The primary structure comprises 352 residues: UDP-N-acetylglucosamine--N-acetylmuramyl-(pentapeptide) pyrophosphoryl-undecaprenol N-acetylglucosamine transferase (352 aa).

UDP-N-acetyl-alpha-D-glucosamine-binding positions include 11 to 13 (TGG), Asn-120, Arg-161, Ser-188, and Gln-286.

This sequence belongs to the glycosyltransferase 28 family. MurG subfamily.

It is found in the cell inner membrane. It catalyses the reaction di-trans,octa-cis-undecaprenyl diphospho-N-acetyl-alpha-D-muramoyl-L-alanyl-D-glutamyl-meso-2,6-diaminopimeloyl-D-alanyl-D-alanine + UDP-N-acetyl-alpha-D-glucosamine = di-trans,octa-cis-undecaprenyl diphospho-[N-acetyl-alpha-D-glucosaminyl-(1-&gt;4)]-N-acetyl-alpha-D-muramoyl-L-alanyl-D-glutamyl-meso-2,6-diaminopimeloyl-D-alanyl-D-alanine + UDP + H(+). It functions in the pathway cell wall biogenesis; peptidoglycan biosynthesis. In terms of biological role, cell wall formation. Catalyzes the transfer of a GlcNAc subunit on undecaprenyl-pyrophosphoryl-MurNAc-pentapeptide (lipid intermediate I) to form undecaprenyl-pyrophosphoryl-MurNAc-(pentapeptide)GlcNAc (lipid intermediate II). The sequence is that of UDP-N-acetylglucosamine--N-acetylmuramyl-(pentapeptide) pyrophosphoryl-undecaprenol N-acetylglucosamine transferase from Prochlorococcus marinus (strain NATL2A).